The chain runs to 447 residues: MRFRIYKRKVLILTLVVAACGFVLWSSNGRQRKNEALAPPLLDAEPARGAGGRGGDHPSVAVGIRRVSNVSAASLVPAVPQPEADNLTLRYRSLVYQLNFDQTLRNVDKAGTWAPRELVLVVQVHNRPEYLRLLLDSLRKAQGIDNVLVIFSHDFWSTEINQLIAGVNFCPVLQVFFPFSIQLYPNEFPGSDPRDCPRDLPKNAALKLGCINAEYPDSFGHYREAKFSQTKHHWWWKLHFVWERVKILRDYAGLILFLEEDHYLAPDFYHVFKKMWKLKQQECPECDVLSLGTYSASRSFYGMADKVDVKTWKSTEHNMGLALTRNAYQKLIECTDTFCTYDDYNWDWTLQYLTVSCLPKFWKVLVPQIPRIFHAGDCGMHHKKTCRPSTQSAQIESLLNNNKQYMFPETLTISEKFTVVAISPPRKNGGWGDIRDHELCKSYRRLQ.

Topologically, residues 1-9 are cytoplasmic; it reads MRFRIYKRK. Residues 10–29 form a helical; Signal-anchor for type II membrane protein membrane-spanning segment; that stretch reads VLILTLVVAACGFVLWSSNG. At 30–447 the chain is on the lumenal side; it reads RQRKNEALAP…ELCKSYRRLQ (418 aa). N-linked (GlcNAc...) asparagine glycosylation is found at asparagine 69 and asparagine 86. Substrate-binding positions include 123 to 127 and aspartate 154; that span reads QVHNR. Cysteine 196 and cysteine 210 form a disulfide bridge. 229–233 contacts substrate; sequence QTKHH. Aspartate 261 serves as a coordination point for Mn(2+). The cysteines at positions 283 and 286 are disulfide-linked. Arginine 298 contributes to the substrate binding site. Intrachain disulfides connect cysteine 334-cysteine 357, cysteine 339-cysteine 440, and cysteine 378-cysteine 386. Histidine 374 lines the Mn(2+) pocket.

It belongs to the glycosyltransferase 16 (GT16) protein family. In terms of assembly, homodimer. Mn(2+) is required as a cofactor.

It localises to the golgi apparatus membrane. The catalysed reaction is an N(4)-{beta-D-GlcNAc-(1-&gt;2)-alpha-D-Man-(1-&gt;3)-[alpha-D-Man-(1-&gt;6)]-beta-D-Man-(1-&gt;4)-beta-D-GlcNAc-(1-&gt;4)-beta-D-GlcNAc}-L-asparaginyl-[protein] + UDP-N-acetyl-alpha-D-glucosamine = N(4)-{beta-D-GlcNAc-(1-&gt;2)-alpha-D-Man-(1-&gt;3)-[beta-D-GlcNAc-(1-&gt;2)-alpha-D-Man-(1-&gt;6)]-beta-D-Man-(1-&gt;4)-beta-D-GlcNAc-(1-&gt;4)-beta-D-GlcNAc}-L-asparaginyl-[protein] + UDP + H(+). It participates in protein modification; protein glycosylation. Functionally, plays an essential role in protein N-glycosylation. Catalyzes the transfer of N-acetylglucosamine (GlcNAc) onto the free terminal mannose moiety in the core structure of the nascent N-linked glycan chain, giving rise to the second branch in complex glycans. The sequence is that of Alpha-1,6-mannosyl-glycoprotein 2-beta-N-acetylglucosaminyltransferase (MGAT2) from Homo sapiens (Human).